A 129-amino-acid polypeptide reads, in one-letter code: Prefoldin subunit 6 (129 aa).

At alanine 2 the chain carries N-acetylalanine. Lysine 21 is modified (N6-acetyllysine). The residue at position 66 (lysine 66) is an N6-acetyllysine; alternate. Lysine 66 participates in a covalent cross-link: Glycyl lysine isopeptide (Lys-Gly) (interchain with G-Cter in SUMO1); alternate. A Glycyl lysine isopeptide (Lys-Gly) (interchain with G-Cter in SUMO2); alternate cross-link involves residue lysine 66.

Belongs to the prefoldin subunit beta family. As to quaternary structure, heterohexamer of two PFD-alpha type and four PFD-beta type subunits. Component of the PAQosome complex which is responsible for the biogenesis of several protein complexes and which consists of R2TP complex members RUVBL1, RUVBL2, RPAP3 and PIH1D1, URI complex members PFDN2, PFDN6, PDRG1, UXT and URI1 as well as ASDURF, POLR2E and DNAAF10/WDR92.

Functionally, binds specifically to cytosolic chaperonin (c-CPN) and transfers target proteins to it. Binds to nascent polypeptide chain and promotes folding in an environment in which there are many competing pathways for nonnative proteins. This chain is Prefoldin subunit 6 (PFDN6), found in Homo sapiens (Human).